The primary structure comprises 21 residues: Complement receptor 3-related protein (21 aa).

It localises to the secreted. Functionally, plays a role in adherence of C.albicans to buccal epithelial cells, and in biofilm formation. The protein is Complement receptor 3-related protein of Candida albicans (Yeast).